Consider the following 865-residue polypeptide: Centrosomal protein of 97 kDa (865 aa).

LRR repeat units lie at residues 37-58 (DIHT…EKCK), 59-80 (RLIQ…AKLT), 81-102 (LLRV…KELV), 103-124 (HLEW…NSCT), 125-146 (ALQH…SKLV), 147-168 (SLKT…PAYL), 171-192 (SLAI…SFLA), and 196-205 (ELEQLSIMNN). An LRRCT domain is found at 211 to 249 (TPSIPGFDYRPYIVSWCLNLRVLDGYVISQKESLKAEWL). A CCP110-binding region spans residues 300–750 (HQRQLMNQSQ…RYGKESDLGD (451 aa)). Phosphoserine occurs at positions 308, 413, and 500. The interval 506 to 529 (ESTEQKQSDIKKPENTQPENKETI) is disordered. Basic and acidic residues predominate over residues 508 to 527 (TEQKQSDIKKPENTQPENKE). Position 530 is a phosphoserine (Ser-530). Thr-542 carries the post-translational modification Phosphothreonine. The IQ domain occupies 558–587 (LNDAATKLQACWRGFYARNYNPQAKDVRYE). The tract at residues 587-865 (EIRLRRMQEH…FQLLHVGVTV (279 aa)) is interaction with MPHOSPH9. A disordered region spans residues 715 to 769 (QHSLDFEKSSTEGSESSIMGNSIDTVRYGKESDLGDVSEEHGEWNKESSNNEQDN). A compositionally biased stretch (polar residues) spans 725-738 (TEGSESSIMGNSID). Positions 741–760 (RYGKESDLGDVSEEHGEWNK) are enriched in basic and acidic residues. Residue Ser-763 is modified to Phosphoserine.

In terms of assembly, interacts with CALM1, CEP76, KIF24 and TALPID3. Interacts with CCP110. ENKD1 competes with CEP97 for binding to CCP110, destabilizing the interaction between CP110 and CEP97 which promotes the removal of CCP110 and CEP97 from the mother centriole and allows the initiation of ciliogenesis. Via its interaction with CCP110, may indirectly interact with HERC2 and NEURL4. Interacts with MPHOSPH9.

It localises to the cytoplasm. Its subcellular location is the cytoskeleton. The protein resides in the microtubule organizing center. It is found in the centrosome. The protein localises to the centriole. In terms of biological role, acts as a key negative regulator of ciliogenesis in collaboration with CCP110 by capping the mother centriole thereby preventing cilia formation. Required for recruitment of CCP110 to the centrosome. The chain is Centrosomal protein of 97 kDa (CEP97) from Homo sapiens (Human).